The sequence spans 61 residues: Acetylcholinesterase toxin C (61 aa).

4 cysteine pairs are disulfide-bonded: cysteine 3/cysteine 22, cysteine 17/cysteine 39, cysteine 41/cysteine 52, and cysteine 53/cysteine 59.

This sequence belongs to the three-finger toxin family. Short-chain subfamily. Acn-esterase inhibitor sub-subfamily. As to expression, expressed by the venom gland.

It localises to the secreted. Functionally, inhibits acetylcholinesterase. In Dendroaspis polylepis polylepis (Black mamba), this protein is Acetylcholinesterase toxin C.